The chain runs to 750 residues: Photosystem I P700 chlorophyll a apoprotein A1 (750 aa).

The next 8 helical transmembrane spans lie at Val-70–Ala-93, Leu-156–His-179, Leu-195–Leu-219, Ile-291–Tyr-309, Trp-346–Tyr-369, Leu-385–Val-411, Ala-433–His-455, and Phe-531–Leu-549. Residues Cys-573 and Cys-582 each contribute to the [4Fe-4S] cluster site. Transmembrane regions (helical) follow at residues His-589 to Trp-610 and Leu-664 to Phe-686. His-675 is a chlorophyll a' binding site. Residues Met-683 and Tyr-691 each contribute to the chlorophyll a site. Trp-692 is a phylloquinone binding site. The chain crosses the membrane as a helical span at residues Ala-724–Ala-744.

It belongs to the PsaA/PsaB family. In terms of assembly, the PsaA/B heterodimer binds the P700 chlorophyll special pair and subsequent electron acceptors. PSI consists of a core antenna complex that captures photons, and an electron transfer chain that converts photonic excitation into a charge separation. The eukaryotic PSI reaction center is composed of at least 11 subunits. The cofactor is P700 is a chlorophyll a/chlorophyll a' dimer, A0 is one or more chlorophyll a, A1 is one or both phylloquinones and FX is a shared 4Fe-4S iron-sulfur center..

It is found in the plastid. The protein localises to the chloroplast thylakoid membrane. It carries out the reaction reduced [plastocyanin] + hnu + oxidized [2Fe-2S]-[ferredoxin] = oxidized [plastocyanin] + reduced [2Fe-2S]-[ferredoxin]. PsaA and PsaB bind P700, the primary electron donor of photosystem I (PSI), as well as the electron acceptors A0, A1 and FX. PSI is a plastocyanin-ferredoxin oxidoreductase, converting photonic excitation into a charge separation, which transfers an electron from the donor P700 chlorophyll pair to the spectroscopically characterized acceptors A0, A1, FX, FA and FB in turn. Oxidized P700 is reduced on the lumenal side of the thylakoid membrane by plastocyanin. In Phaseolus vulgaris (Kidney bean), this protein is Photosystem I P700 chlorophyll a apoprotein A1.